Here is a 101-residue protein sequence, read N- to C-terminus: Small ribosomal subunit protein uS14 (101 aa).

Belongs to the universal ribosomal protein uS14 family. In terms of assembly, part of the 30S ribosomal subunit. Contacts proteins S3 and S10.

Binds 16S rRNA, required for the assembly of 30S particles and may also be responsible for determining the conformation of the 16S rRNA at the A site. This is Small ribosomal subunit protein uS14 from Proteus mirabilis (strain HI4320).